Reading from the N-terminus, the 321-residue chain is NADH-ubiquinone oxidoreductase chain 1 (321 aa).

8 helical membrane passes run 2–22 (LVML…VAFL), 71–91 (ALFI…WMFI), 104–124 (LLVI…SGWA), 148–168 (LGLI…QAFI), 173–193 (HTWF…STLA), 224–244 (LFFL…AIMF), 255–275 (ILPI…FLWI), and 295–315 (FLPL…SLGG).

This sequence belongs to the complex I subunit 1 family.

Its subcellular location is the mitochondrion inner membrane. It catalyses the reaction a ubiquinone + NADH + 5 H(+)(in) = a ubiquinol + NAD(+) + 4 H(+)(out). Core subunit of the mitochondrial membrane respiratory chain NADH dehydrogenase (Complex I) that is believed to belong to the minimal assembly required for catalysis. Complex I functions in the transfer of electrons from NADH to the respiratory chain. The immediate electron acceptor for the enzyme is believed to be ubiquinone. This is NADH-ubiquinone oxidoreductase chain 1 (MT-ND1) from Lampetra fluviatilis (European river lamprey).